The following is a 283-amino-acid chain: 4-diphosphocytidyl-2-C-methyl-D-erythritol kinase (283 aa).

The active site involves lysine 10. An ATP-binding site is contributed by proline 95–serine 105. Aspartate 137 is an active-site residue.

It belongs to the GHMP kinase family. IspE subfamily.

It catalyses the reaction 4-CDP-2-C-methyl-D-erythritol + ATP = 4-CDP-2-C-methyl-D-erythritol 2-phosphate + ADP + H(+). Its pathway is isoprenoid biosynthesis; isopentenyl diphosphate biosynthesis via DXP pathway; isopentenyl diphosphate from 1-deoxy-D-xylulose 5-phosphate: step 3/6. Catalyzes the phosphorylation of the position 2 hydroxy group of 4-diphosphocytidyl-2C-methyl-D-erythritol. The protein is 4-diphosphocytidyl-2-C-methyl-D-erythritol kinase of Limosilactobacillus reuteri (strain DSM 20016) (Lactobacillus reuteri).